Here is a 592-residue protein sequence, read N- to C-terminus: MAGEGRVVRVNGPLVVADGMRNAQMFEVVEVGELRLVGEITRIEGDRAYIQVYEATDGIKPGEKAYRTGSLLSVELGPGLMGGIFDGLQRPLDRIAESVKSPFVTRGVKVPALERNKKWHVIPVAKKGDKVSPGDIIAKVNETDLIEHRIIVPPNVHGTLKEISPEGDYTVEDVIARVDMEGDVKELKLYQRWPVRIPRPFKEKLEPTEPLLTGTRVVDTIFPIAKGGTAAIPGPFGSGKTVTLQSLAKWSEAKVVIYVGCGERGNEMTDELRQFPKLKDPWTGKPLLQRTILVANTSNMPVAARESSIYVGVTMAEYFRDQGYDVLLVADSTSRWAEALRELGGRMEEMPAEEGFPSYLPSRLAEYYERAGRVIALGKPERFGSVSIASAVSPPGGDFTEPVTSNTLRFVRVFWPLDVSLAQARHYPAINWIQGFSAYVDLVASWWHKNVDPTWFEMRSVLVKILLREDELRQIVRLVGPESLSDKDKLILEASKLIRDAFLKQNAFDDIDAFSSPQKQAKIMRLIYDFYTNASQLLDKGLTLKKILEKVGSFEPDIVRVKYTVKNDELNKIDELDNKLKEAFDSLLKEVA.

ATP is bound at residue 234 to 241 (GPFGSGKT).

This sequence belongs to the ATPase alpha/beta chains family. Has multiple subunits with at least A(3), B(3), C, D, E, F, H, I and proteolipid K(x).

It localises to the cell membrane. The enzyme catalyses ATP + H2O + 4 H(+)(in) = ADP + phosphate + 5 H(+)(out). Functionally, produces ATP from ADP in the presence of a proton gradient across the membrane. The archaeal alpha chain is a catalytic subunit. In terms of biological role, component of the A-type ATP synthase that produces ATP from ADP in the presence of a proton gradient across the membrane. The A chain is the catalytic subunit. The protein is A-type ATP synthase subunit A of Sulfolobus acidocaldarius (strain ATCC 33909 / DSM 639 / JCM 8929 / NBRC 15157 / NCIMB 11770).